The chain runs to 2346 residues: MSNGYRTLSQHLNDLKKENFSLKLRIYFLEERMQQKYEASREDIYKRNIELKVEVESLKRELQDKKQHLDKTWADVENLNSQNEAELRRQFEERQQETEHVYELLENKIQLLQEESRLAKNEAARMAALVEAEKECNLELSEKLKGVTKNWEDVPGDQVKPDQYTEALAQRDKRIEELNQSLAAQERLVEQLSREKQQLLHLLEEPTSMEVQPMTEELLKQQKLNSHETTITQQSVSDSHLAELQEKIQQTEATNKILQEKLNEMSYELKCAQESSQKQDGTIQNLKETLKSRERETEELYQVIEGQNDTMAKLREMLHQSQLGQLHSSEGTSPAQQQVALLDLQSALFCSQLEIQKLQRVVRQKERQLADAKQCVQFVEAAAHESEQQKEASWKHNQELRKALQQLQEELQNKSQQLRAWEAEKYNEIRTQEQNIQHLNHSLSHKEQLLQEFRELLQYRDNSDKTLEANEMLLEKLRQRIHDKAVALERAIDEKFSALEEKEKELRQLRLAVRERDHDLERLRDVLSSNEATMQSMESLLRAKGLEVEQLSTTCQNLQWLKEEMETKFSRWQKEQESIIQQLQTSLHDRNKEVEDLSATLLCKLGPGQSEIAEELCQRLQRKERMLQDLLSDRNKQVLEHEMEIQGLLQSVSTREQESQAAAEKLVQALMERNSELQALRQYLGGRDSLMSQAPISNQQAEVTPTGRLGKQTDQGSMQIPSRDDSTSLTAKEDVSIPRSTLGDLDTVAGLEKELSNAKEELELMAKKERESQMELSALQSMMAVQEEELQVQAADMESLTRNIQIKEDLIKDLQMQLVDPEDIPAMERLTQEVLLLREKVASVESQGQEISGNRRQQLLLMLEGLVDERSRLNEALQAERQLYSSLVKFHAHPESSERDRTLQVELEGAQVLRSRLEEVLGRSLERLNRLETLAAIGGAAAGDDTEDTSTEFTDSIEEEAAHHSHQQLVKVALEKSLATVETQNPSFSPPSPMGGDSNRCLQEEMLHLRAEFHQHLEEKRKAEEELKELKAQIEEAGFSSVSHIRNTMLSLCLENAELKEQMGEAMSDGWEIEEDKEKGEVMVETVVTKEGLSESSLQAEFRKLQGKLKNAHNIINLLKEQLVLSSKEGNSKLTPELLVHLTSTIERINTELVGSPGKHQHQEEGNVTVRPFPRPQSLDLGATFTVDAHQLDNQSQPRDPGPQSAFSLPGSTQHLRSQLSQCKQRYQDLQEKLLLSEATVFAQANELEKYRVMLTGESLVKQDSKQIQVDLQDLGYETCGRSENEAEREETTSPECEEHNSLKEMVLMEGLCSEQGRRGSTLASSSERKPLENQLGKQEEFRVYGKSENILVLRKDIKDLKAQLQNANKVIQNLKSRVRSLSVTSDYSSSLERPRKLRAVGTLEGSSPHSVPDEDEGWLSDGTGAFYSPGLQAKKDLESLIQRVSQLEAQLPKNGLEEKLAEELRSASWPGKYDSLIQDQARELSYLRQKIREGRGICYLITRHAKDTVKSFEDLLRSNDIDYYLGQSFREQLAQGSQLTERLTSKLSTKDHKSEKDQAGLEPLALRLSRELQEKEKVIEVLQAKLDARSLTPSSSHALSDSHRSPSSTSFLSDELEACSDMDIVSEYTHYEEKKASPSHSDSIHHSSHSAVLSSKPSSTSASQGAKAESNSNPISLPTPQNTPKEANQAHSGFHFHSIPKLASLPQAPLPSAPSSFLPFSPTGPLLLGCCETPVVSLAEAQQELQMLQKQLGESASTVPPASTATLLSNDLEADSSYYLNSAQPHSPPRGTIELGRILEPGYLGSSGKWDVMRPQKGSVSGDLSSGSSVYQLNSKPTGADLLEEHLGEIRNLRQRLEESICINDRLREQLEHRLTSTARGRGSTSNFYSQGLESIPQLCNENRVLREDNRRLQAQLSHVSREHSQETESLREALLSSRSHLQELEKELEHQKVERQQLLEDLREKQQEVLHFREERLSLQENDSRLQHKLVLLQQQCEEKQQLFESLQSELQIYEALYGNSKKGLKAYSLDACHQIPLSSDLSHLVAEVRALRGQLEQSIQGNNCLRLQLQQQLESGAGKASLSPSSINQNFPASTDPGNKQLLLQDSAVSPPVRDVGMNSPALVFPSSASSTPGSETPIINRANGLGLDTSPVMKTPPKLEGDATDGSFANKHGRHVIGHIDDYSALRQQIAEGKLLVKKIVSLVRSACSFPGLEAQGTEVLGSKGIHELRSSTSALHHALEESASLLTMFWRAALPSTHIPVLPGKVGESTERELLELRTKVSKQERLLQSTTEHLKNANQQKESMEQFIVSQLTRTHDVLKKARTNLEVKSLRALPCTPAL.

Coiled-coil stretches lie at residues 41-132 (REDI…LVEA), 162-205 (DQYT…LLEE), 238-318 (DSHL…REML), and 350-684 (CSQL…RQYL). Glu-252 bears the Phosphoserine mark. Residues 698–732 (NQQAEVTPTGRLGKQTDQGSMQIPSRDDSTSLTAK) form a disordered region. Thr-704 is modified (phosphothreonine). The span at 722-732 (SRDDSTSLTAK) shows a compositional bias: basic and acidic residues. Coiled coils occupy residues 743-936 (GDLD…TLAA), 1002-1043 (LQEE…SSVS), 1096-1124 (SSLQAEFRKLQGKLKNAHNIINLLKEQLV), 1212-1240 (STQHLRSQLSQCKQRYQDLQEKLLLSEAT), 1346-1385 (GKSENILVLRKDIKDLKAQLQNANKVIQNLKSRVRSLSVT), and 1431-1455 (GLQAKKDLESLIQRVSQLEAQLPKN). Residues 1193 to 1214 (DNQSQPRDPGPQSAFSLPGSTQ) form a disordered region. Residues 1205–1214 (SAFSLPGSTQ) show a composition bias toward polar residues. In terms of domain architecture, Olduvai spans 1551-1642 (KDHKSEKDQA…EEKKASPSHS (92 aa)). Residues 1591-1600 (SLTPSSSHAL) show a composition bias toward low complexity. Disordered stretches follow at residues 1591-1614 (SLTPSSSHALSDSHRSPSSTSFLS) and 1633-1690 (EEKK…EANQ). The span at 1652–1690 (AVLSSKPSSTSASQGAKAESNSNPISLPTPQNTPKEANQ) shows a compositional bias: polar residues. Coiled-coil stretches lie at residues 1736–1760 (VVSLAEAQQELQMLQKQLGESASTV) and 1840–2077 (GADL…QQLE). Disordered stretches follow at residues 2081 to 2103 (GKASLSPSSINQNFPASTDPGNK) and 2127 to 2156 (VFPSSASSTPGSETPIINRANGLGLDTSPV). Residues 2085-2103 (LSPSSINQNFPASTDPGNK) show a composition bias toward polar residues. The stretch at 2273-2312 (ESTERELLELRTKVSKQERLLQSTTEHLKNANQQKESMEQ) forms a coiled coil.

Interacts with PDE4D. Isoform 13 interacts with MAPRE1 and MAPRE3. Isoform 13 forms a pericentrosomal complex with AKAP9, CDK5RAP2 and EB1/MAPRE1; within this complex, may mediate MAPRE1-binding to CDK5RAP2. Interaction of isoform 13 with AKAP9 stabilizes both proteins. Isoform 13 interacts (via N-terminus) with CAMSAP2; this interaction is much stronger in the presence of AKAP9. In complex with AKAP9, Isoform 13 recruits CAMSAP2 to the Golgi apparatus. Isoform 13 interacts with unglycosylated LGALS3BP; this interaction may connect the pericentrosomal complex to the gamma-tubulin ring complex (gamma-TuRC) to promote microtubule assembly and acetylation. Highly expressed in adult and fetal heart, in skeletal muscle and, to a lower extent, in brain and placenta.

Its subcellular location is the golgi apparatus. It is found in the cytoplasm. It localises to the cytoskeleton. The protein resides in the microtubule organizing center. The protein localises to the centrosome. Functionally, functions as an anchor sequestering components of the cAMP-dependent pathway to Golgi and/or centrosomes. Participates in microtubule dynamics, promoting microtubule assembly. Depending upon the cell context, may act at the level of the Golgi apparatus or that of the centrosome. In complex with AKAP9, recruits CAMSAP2 to the Golgi apparatus and tethers non-centrosomal minus-end microtubules to the Golgi, an important step for polarized cell movement. In complex with AKAP9, EB1/MAPRE1 and CDK5RAP2, contributes to microtubules nucleation and extension from the centrosome to the cell periphery, a crucial process for directed cell migration, mitotic spindle orientation and cell-cycle progression. The chain is Myomegalin (PDE4DIP) from Homo sapiens (Human).